A 165-amino-acid chain; its full sequence is MDKAIYPGTFDPITRGHEDLVRRASGLFREVVVAVAASSGKKPFFTQEERVAMVRQVLTDYPNVKVMPFSGLLMEFAQQQQARVIVRGLRAVSDFEYEFQMAGMNRTLYPDVETLFLTPSEQYMFISATIVREIALFGGNIEKFVHPLISTQLGMKIASKDKSSR.

Substrate is bound at residue threonine 9. ATP-binding positions include 9-10 (TF) and histidine 17. Substrate-binding residues include lysine 41, leucine 73, and arginine 87. ATP-binding positions include 88–90 (GLR), glutamate 98, and 123–129 (YMFISAT).

The protein belongs to the bacterial CoaD family. As to quaternary structure, homohexamer. Mg(2+) serves as cofactor.

Its subcellular location is the cytoplasm. It catalyses the reaction (R)-4'-phosphopantetheine + ATP + H(+) = 3'-dephospho-CoA + diphosphate. Its pathway is cofactor biosynthesis; coenzyme A biosynthesis; CoA from (R)-pantothenate: step 4/5. In terms of biological role, reversibly transfers an adenylyl group from ATP to 4'-phosphopantetheine, yielding dephospho-CoA (dPCoA) and pyrophosphate. The polypeptide is Phosphopantetheine adenylyltransferase (Nitrosospira multiformis (strain ATCC 25196 / NCIMB 11849 / C 71)).